Consider the following 1089-residue polypeptide: Ankyrin repeat and IBR domain-containing protein 1 (1089 aa).

Residue Gly2 is the site of N-myristoyl glycine attachment. 2 ANK repeats span residues 45–74 (QHNT…NPNK) and 144–173 (KKNT…DLFA). The segment at 281–321 (CQRSGVQMPTPPPSGYNAWDTLPSPRTPRTTRSSVTSPDEI) is disordered. Low complexity predominate over residues 303–318 (PSPRTPRTTRSSVTSP). Residues 329-569 (DTSLCDICMC…GGYYRCTRYE (241 aa)) form a TRIAD supradomain region. Residues Cys333, Cys336, Cys351, His353, Cys356, Cys359, Cys378, Cys383, Cys465, Cys468, His473, Cys478, Cys519, and Cys522 each contribute to the Zn(2+) site. The RING-type 1 zinc finger occupies 333 to 383 (CDICMCSISVFEDPVDMPCGHDFCRGCWESFLNLKIQEGEAHNIFCPAYDC). The segment at 401–478 (DKRYLQFDIK…LGEAHEPCDC (78 aa)) adopts an IBR-type zinc-finger fold. The RING-type 2; atypical zinc finger occupies 519–548 (CANCKSPIQKNEGCNHMQCAKCKYDFCWIC). Residue Cys532 is part of the active site. Positions 537, 540, 545, 548, 555, and 565 each coordinate Zn(2+). Positions 575–640 (EEQSKEMTVE…RALKETEGGC (66 aa)) form a coiled coil. Ser737 is subject to Phosphoserine. The segment at 776-821 (RRGDVHSLLSNPPDPDEPSESTLDIPEGGSSSRRPGTSVVSSASMS) is disordered. The 20-residue stretch at 851–870 (EDDPNILLAIQLSLQESGLA) folds into the UIM domain. Phosphoserine occurs at positions 884 and 911. Disordered stretches follow at residues 889–912 (GTSL…ALSS), 927–964 (AEND…QDPN), and 1026–1089 (DASV…VHLV). Polar residues-rich tracts occupy residues 931-941 (PFSTDTLSSHP) and 1070-1082 (DVSS…SSDW).

The protein belongs to the RBR family.

It carries out the reaction [E2 ubiquitin-conjugating enzyme]-S-ubiquitinyl-L-cysteine + [acceptor protein]-L-lysine = [E2 ubiquitin-conjugating enzyme]-L-cysteine + [acceptor protein]-N(6)-ubiquitinyl-L-lysine.. Might act as an E3 ubiquitin-protein ligase, or as part of E3 complex, which accepts ubiquitin from specific E2 ubiquitin-conjugating enzymes and then transfers it to substrates. The chain is Ankyrin repeat and IBR domain-containing protein 1 (ANKIB1) from Homo sapiens (Human).